The sequence spans 337 residues: Holliday junction branch migration complex subunit RuvB (337 aa).

The interval alanine 4–tyrosine 186 is large ATPase domain (RuvB-L). ATP contacts are provided by residues isoleucine 25, arginine 26, glycine 67, lysine 70, threonine 71, threonine 72, glutamate 133–tyrosine 135, arginine 176, tyrosine 186, and arginine 223. Mg(2+) is bound at residue threonine 71. The segment at lysine 187–aspartate 257 is small ATPAse domain (RuvB-S). The tract at residues valine 260–lysine 337 is head domain (RuvB-H). DNA contacts are provided by arginine 315 and arginine 320.

The protein belongs to the RuvB family. Homohexamer. Forms an RuvA(8)-RuvB(12)-Holliday junction (HJ) complex. HJ DNA is sandwiched between 2 RuvA tetramers; dsDNA enters through RuvA and exits via RuvB. An RuvB hexamer assembles on each DNA strand where it exits the tetramer. Each RuvB hexamer is contacted by two RuvA subunits (via domain III) on 2 adjacent RuvB subunits; this complex drives branch migration. In the full resolvosome a probable DNA-RuvA(4)-RuvB(12)-RuvC(2) complex forms which resolves the HJ.

Its subcellular location is the cytoplasm. It catalyses the reaction ATP + H2O = ADP + phosphate + H(+). The RuvA-RuvB-RuvC complex processes Holliday junction (HJ) DNA during genetic recombination and DNA repair, while the RuvA-RuvB complex plays an important role in the rescue of blocked DNA replication forks via replication fork reversal (RFR). RuvA specifically binds to HJ cruciform DNA, conferring on it an open structure. The RuvB hexamer acts as an ATP-dependent pump, pulling dsDNA into and through the RuvAB complex. RuvB forms 2 homohexamers on either side of HJ DNA bound by 1 or 2 RuvA tetramers; 4 subunits per hexamer contact DNA at a time. Coordinated motions by a converter formed by DNA-disengaged RuvB subunits stimulates ATP hydrolysis and nucleotide exchange. Immobilization of the converter enables RuvB to convert the ATP-contained energy into a lever motion, pulling 2 nucleotides of DNA out of the RuvA tetramer per ATP hydrolyzed, thus driving DNA branch migration. The RuvB motors rotate together with the DNA substrate, which together with the progressing nucleotide cycle form the mechanistic basis for DNA recombination by continuous HJ branch migration. Branch migration allows RuvC to scan DNA until it finds its consensus sequence, where it cleaves and resolves cruciform DNA. In Aliivibrio salmonicida (strain LFI1238) (Vibrio salmonicida (strain LFI1238)), this protein is Holliday junction branch migration complex subunit RuvB.